The sequence spans 328 residues: MTAAVKSEISQLPVTRTCCRKAEVSAVLRFAGGLHLVSGRIVIEAELDTGNAARRLKRDILEIFGHSSELIVMAPGGLRRGSRFVVRVVAGGDQLARQTGLVDGRGRPIRGLPPQVVSGATCDAEAAWRGAFLAHGSLTEPGRSSSLEVTCPGPEAALALVGAARRLSIPAKAREVRGVDRVVVRDGDAIGALLTRLGAHDSVLAWEERRLRREVRATANRLANFDDANLRRSARAAVAAGARVQRALEILADDVPEHLAAAGRLRMEHKQASLEELGALADPPLTKDAVAGRIRRLLAMADKRASDLGIAGTDANLGEEELADNLVG.

The segment at residues 273-306 (SLEELGALADPPLTKDAVAGRIRRLLAMADKRAS) is a DNA-binding region (H-T-H motif).

Belongs to the WhiA family. Monomer in solution.

Its function is as follows. Involved in cell division and chromosome segregation. Involved in sporulation. May coordinate the cessation of aerial hyphae growth and subsequent chromosome segregation and/or septation. Required for expression of the ParB partioning protein during sporogenesis. Activates its own transcription and represses WhiB. Binds with low affinity to its own promoter and to the Parp2 sporulation-specific promoter. Also binds directly to the RNA polymerase sigma factor WhiG, leading to inhibition of WhiG-dependent transcription in a dose-dependent manner. In Streptomyces coelicolor (strain ATCC BAA-471 / A3(2) / M145), this protein is Probable cell division protein WhiA.